Here is a 213-residue protein sequence, read N- to C-terminus: Macrodontain-1 (213 aa).

3 cysteine pairs are disulfide-bonded: cysteine 23-cysteine 63, cysteine 57-cysteine 96, and cysteine 153-cysteine 201. Cysteine 26 is an active-site residue. Catalysis depends on residues histidine 159 and asparagine 176.

Monomer. As to expression, fruits.

Its activity is regulated as follows. Inhibited by the general cysteine protease inhibitor E64 (L-trans-epoxysuccinyl-leucylamide-(4-guanido)-butane). Cysteine protease that catalyzes the preferential cleavage: Ala-|-Xaa &gt; Gln-|-Xaa &gt; Tyr-Xaa &gt;&gt; Leu-|-Xaa &gt; Gly-|-Xaa. Hydrolyzes the synthetic peptide substrate Bz-Phe-Val-Arg-pNA. In Ananas macrodontes (False pineapple), this protein is Macrodontain-1.